A 429-amino-acid chain; its full sequence is MEIVCEDFQKALTKIKLLRENANIIEETVQRSVREIVQNVRESRDEALSFYTKKFDGVEIKDVRVSEEEIKQASMFVESSFLEALQEAKKNIISYHEKQKRQSMFDCTSKGIIRGQIIRPLENIGVYVPGGTASYPSSVLMNVLPAKLAGVKKIVMVTPPRAGGIDPHILVAASLAGVDEIYMIGGAQAIAALAYGTESIPKVDKIVGPGNLYVALAKREVYGIVNIDMIAGPSEIVVIADETGNAKYIAADLLSQAEHDERATAICITTNIELAKEVEKEIERQLETLPRSEIARESINRNGAIFIVPSIDEALQLSNEIAPEHLELHIKEPMNALAYVKHAGSIFLGPYAPEPLGDYLAGPNHVLPTSGTARFFSPLSVDDFVKKSSFLSYTEGALRDVKHHIVELANKEGLHAHARAIQIRFGEEE.

Residues Tyr127, Gln188, and Asn211 each coordinate NAD(+). The substrate site is built by Ser234, Gln256, and His259. Positions 256 and 259 each coordinate Zn(2+). Catalysis depends on proton acceptor residues Glu324 and His325. Substrate-binding residues include His325, Asp358, Glu412, and His417. Residue Asp358 participates in Zn(2+) binding. His417 is a Zn(2+) binding site.

Belongs to the histidinol dehydrogenase family. Zn(2+) is required as a cofactor.

It carries out the reaction L-histidinol + 2 NAD(+) + H2O = L-histidine + 2 NADH + 3 H(+). Its pathway is amino-acid biosynthesis; L-histidine biosynthesis; L-histidine from 5-phospho-alpha-D-ribose 1-diphosphate: step 9/9. Its function is as follows. Catalyzes the sequential NAD-dependent oxidations of L-histidinol to L-histidinaldehyde and then to L-histidine. This Bacillus anthracis protein is Histidinol dehydrogenase.